A 112-amino-acid polypeptide reads, in one-letter code: ATP synthase epsilon chain (112 aa).

Belongs to the ATPase epsilon chain family. In terms of assembly, F-type ATPases have 2 components, CF(1) - the catalytic core - and CF(0) - the membrane proton channel. CF(1) has five subunits: alpha(3), beta(3), gamma(1), delta(1), epsilon(1). CF(0) has three main subunits: a, b and c.

Its subcellular location is the cell inner membrane. In terms of biological role, produces ATP from ADP in the presence of a proton gradient across the membrane. This chain is ATP synthase epsilon chain, found in Rickettsia rickettsii (strain Sheila Smith).